Consider the following 504-residue polypeptide: uncharacterized protein (504 aa).

The protein to M.thermoautotrophicum MTH1137.

This is an uncharacterized protein from Methanocaldococcus jannaschii (strain ATCC 43067 / DSM 2661 / JAL-1 / JCM 10045 / NBRC 100440) (Methanococcus jannaschii).